A 35-amino-acid polypeptide reads, in one-letter code: Cupiennin-1a (35 aa).

Glutamate 35 is modified (glutamic acid 1-amide).

Belongs to the cationic peptide 04 (cupiennin) family. 01 subfamily. Monomer. Interacts with CSTX-1 (AC P81694), CSTX-9 (AC P58604), and CSTX-13 (AC P83919). In terms of tissue distribution, expressed by the venom gland.

It localises to the secreted. Has antimicrobial activity against B.subtilis, E.coli, E.faecalis, P.denitrificans, P.aeruginosa, P.putida, S.aureus, and S.epidermidis. Shows insecticidal and hemolytic activities. Probably acts by disturbing membrane function with its amphipathic structure. Synergistically increases the insecticidal activity of CSTX-1 (AC P81694), CSTX-9 (AC P58604), and CSTX-13 (AC P83919) by up to 65%. Also inhibits the formation of nitric oxide by neuronal nitric oxide synthase. The polypeptide is Cupiennin-1a (Cupiennius salei (American wandering spider)).